A 460-amino-acid polypeptide reads, in one-letter code: Zinc transporter 6 (460 aa).

Residues 1 to 33 (MGTIHLFRKPQRSFFGKLLQEFRLVAADRRSWK) are Cytoplasmic-facing. A helical membrane pass occupies residues 34–54 (ILLFGAINVLCTGFLLMWCSS). Topologically, residues 55–64 (TNSIALTAYT) are extracellular. A helical membrane pass occupies residues 65–85 (YLTIFDLFSLITCLISYWVMM). Over 86–98 (RKPSPVYSFGFER) the chain is Cytoplasmic. The helical transmembrane segment at 99–119 (LEVLAVFASTVLAQLGALFIL) threads the bilayer. Topologically, residues 120–134 (KESAERFLEQPEIHT) are extracellular. The helical transmembrane segment at 135–155 (GRLLVGTFVALSFNLFTMLSI) threads the bilayer. Over 156-200 (RNKPFAYVSEAASTSWLQEHVADLSRSLCGLIPGLSSIFLPRMNP) the chain is Cytoplasmic. Residues 201-221 (FVLIDLAGAFALCITYMLIEI) form a helical membrane-spanning segment. The Extracellular portion of the chain corresponds to 222 to 223 (NN). A helical transmembrane segment spans residues 224–244 (YFAVDTASAIAIALMTFGTMY). At 245–460 (PMSVYSGKVL…GINRMGQPRP (216 aa)) the chain is on the cytoplasmic side. Positions 371–390 (TPVTSTPAKPSSPPPEFSFN) are disordered.

It belongs to the cation diffusion facilitator (CDF) transporter (TC 2.A.4) family. SLC30A subfamily. In terms of assembly, heterodimer with SLC30A5; form a functional zinc ion transmembrane transporter. Expressed in brain and liver, and to a lower extent also in lung. Highly expressed in brain (at protein level).

The protein resides in the golgi apparatus. It localises to the trans-Golgi network membrane. Has probably no intrinsic transporter activity but together with SLC30A5 forms a functional zinc ion:proton antiporter heterodimer, mediating zinc entry into the lumen of organelles along the secretory pathway. As part of that zinc ion:proton antiporter, contributes to zinc ion homeostasis within the early secretory pathway and regulates the activation and folding of enzymes like alkaline phosphatases and enzymes involved in phosphatidylinositol glycan anchor biosynthesis. This chain is Zinc transporter 6 (Slc30a6), found in Mus musculus (Mouse).